The sequence spans 338 residues: Very-long-chain 3-oxoacyl-CoA reductase (338 aa).

Residues 20 to 40 (LSAFLLVMGSIGVGRVIYQTL) form a helical membrane-spanning segment. NADP(+) is bound by residues valine 66, asparagine 95, aspartate 120, asparagine 147, tyrosine 214, lysine 218, valine 247, and serine 249. Catalysis depends on tyrosine 214, which acts as the Proton donor. The active-site Lowers pKa of active site Tyr is lysine 218.

The protein belongs to the short-chain dehydrogenases/reductases (SDR) family.

The protein localises to the endoplasmic reticulum membrane. The enzyme catalyses a very-long-chain (3R)-3-hydroxyacyl-CoA + NADP(+) = a very-long-chain 3-oxoacyl-CoA + NADPH + H(+). It functions in the pathway lipid metabolism; fatty acid biosynthesis. In terms of biological role, component of the microsomal membrane bound fatty acid elongation system, which produces the 26-carbon very long-chain fatty acids (VLCFA) from palmitate. Catalyzes the reduction of the 3-ketoacyl-CoA intermediate that is formed in each cycle of fatty acid elongation. VLCFAs serve as precursors for ceramide and sphingolipids. In Laccaria bicolor (strain S238N-H82 / ATCC MYA-4686) (Bicoloured deceiver), this protein is Very-long-chain 3-oxoacyl-CoA reductase.